The sequence spans 111 residues: Disintegrin piscivostatin-alpha (111 aa).

The first 20 residues, 1–20, serve as a signal peptide directing secretion; that stretch reads MIQVLLVTICLAVFPYQGSS. The propeptide occupies 21–44; sequence IILESGNVNDYEVVYPRKITPLPK. The region spanning 45-111 is the Disintegrin domain; that stretch reads GAVQPKNPCC…GDCPRKHFYA (67 aa). Disulfide bonds link Cys-53–Cys-76, Cys-67–Cys-73, Cys-72–Cys-97, and Cys-85–Cys-104. The Cell attachment site motif lies at 89 to 91; that stretch reads RGD. A propeptide spanning residues 110–111 is cleaved from the precursor; the sequence is YA.

Belongs to the disintegrin family. Dimeric disintegrin subfamily. As to quaternary structure, heterodimer with piscivostatin-beta; disulfide-linked. Expressed by the venom gland.

It is found in the secreted. In terms of biological role, inhibits fibrinogen interaction with platelets. Acts by binding to alpha-IIb/beta-3 (ITGA2B/ITGB3) on the platelet surface and inhibits both ADP-induced platelet aggregation and platelet aggregate dissociation in human platelet-rich plasma. The sequence is that of Disintegrin piscivostatin-alpha from Agkistrodon piscivorus piscivorus (Eastern cottonmouth).